We begin with the raw amino-acid sequence, 361 residues long: Nicotinate-nucleotide--dimethylbenzimidazole phosphoribosyltransferase (361 aa).

The active-site Proton acceptor is the E315.

This sequence belongs to the CobT family.

The enzyme catalyses 5,6-dimethylbenzimidazole + nicotinate beta-D-ribonucleotide = alpha-ribazole 5'-phosphate + nicotinate + H(+). The protein operates within nucleoside biosynthesis; alpha-ribazole biosynthesis; alpha-ribazole from 5,6-dimethylbenzimidazole: step 1/2. Catalyzes the synthesis of alpha-ribazole-5'-phosphate from nicotinate mononucleotide (NAMN) and 5,6-dimethylbenzimidazole (DMB). This is Nicotinate-nucleotide--dimethylbenzimidazole phosphoribosyltransferase from Clostridium perfringens (strain ATCC 13124 / DSM 756 / JCM 1290 / NCIMB 6125 / NCTC 8237 / Type A).